Reading from the N-terminus, the 828-residue chain is Periplasmic nitrate reductase 1 (828 aa).

Positions 1–30 (MKMTRRAFVKANAAASAAAVAGITLPASAA) form a signal peptide, tat-type signal. In terms of domain architecture, 4Fe-4S Mo/W bis-MGD-type spans 41–97 (IKWDKAPCRFCGTGCSVLVGTQNGRVVATQGDPEAPVNKGLNCIKGYFLSKIMYGKD). Residues cysteine 48, cysteine 51, cysteine 55, and cysteine 83 each coordinate [4Fe-4S] cluster. Residues lysine 85, glutamine 152, asparagine 177, cysteine 181, 214 to 221 (WGSNMAEM), 245 to 249 (STYYH), 264 to 266 (QTD), methionine 374, glutamine 378, asparagine 484, 510 to 511 (SD), lysine 533, aspartate 560, and 718 to 727 (TGRVLEHWHT) contribute to the Mo-bis(molybdopterin guanine dinucleotide) site. Residue phenylalanine 794 coordinates substrate. Residues asparagine 802 and lysine 819 each coordinate Mo-bis(molybdopterin guanine dinucleotide).

It belongs to the prokaryotic molybdopterin-containing oxidoreductase family. NasA/NapA/NarB subfamily. In terms of assembly, component of the periplasmic nitrate reductase NapAB complex composed of NapA and NapB. The cofactor is [4Fe-4S] cluster. Requires Mo-bis(molybdopterin guanine dinucleotide) as cofactor. Predicted to be exported by the Tat system. The position of the signal peptide cleavage has not been experimentally proven.

It is found in the periplasm. The enzyme catalyses 2 Fe(II)-[cytochrome] + nitrate + 2 H(+) = 2 Fe(III)-[cytochrome] + nitrite + H2O. Catalytic subunit of the periplasmic nitrate reductase complex NapAB. Receives electrons from NapB and catalyzes the reduction of nitrate to nitrite. This Photobacterium profundum (strain SS9) protein is Periplasmic nitrate reductase 1.